Reading from the N-terminus, the 224-residue chain is Lipoprotein-releasing system ATP-binding protein LolD (224 aa).

In terms of domain architecture, ABC transporter spans 6-224 (VRLRELRRSF…VVRLHEGVLE (219 aa)). ATP is bound at residue 42–49 (GPSGSGKS).

Belongs to the ABC transporter superfamily. Lipoprotein translocase (TC 3.A.1.125) family. In terms of assembly, the complex is composed of two ATP-binding proteins (LolD) and two transmembrane proteins (LolC and LolE).

It is found in the cell inner membrane. Its function is as follows. Part of the ABC transporter complex LolCDE involved in the translocation of mature outer membrane-directed lipoproteins, from the inner membrane to the periplasmic chaperone, LolA. Responsible for the formation of the LolA-lipoprotein complex in an ATP-dependent manner. This chain is Lipoprotein-releasing system ATP-binding protein LolD, found in Novosphingobium aromaticivorans (strain ATCC 700278 / DSM 12444 / CCUG 56034 / CIP 105152 / NBRC 16084 / F199).